The sequence spans 616 residues: Chaperone protein HscA (616 aa).

The protein belongs to the heat shock protein 70 family.

In terms of biological role, chaperone involved in the maturation of iron-sulfur cluster-containing proteins. Has a low intrinsic ATPase activity which is markedly stimulated by HscB. Involved in the maturation of IscU. In Escherichia coli O17:K52:H18 (strain UMN026 / ExPEC), this protein is Chaperone protein HscA.